The following is a 536-amino-acid chain: Enterobactin synthase component E (536 aa).

Residues Asn235, Ser240, Gly309, Val331, Ala335, Asp415, and Lys432 each contribute to the substrate site. The segment at 438–439 is phosphopantetheine binding; sequence GG. Lys441 lines the substrate pocket.

Belongs to the ATP-dependent AMP-binding enzyme family. EntE subfamily. As to quaternary structure, proteins EntB, EntD, EntE, and EntF form a multienzyme complex called enterobactin synthase. Monomer. EntA and EntE interact together.

It localises to the membrane. The enzyme catalyses 3 2,3-dihydroxybenzoate + 3 L-serine + 6 ATP = enterobactin + 6 AMP + 6 diphosphate + 4 H(+). It carries out the reaction 2,3-dihydroxybenzoate + holo-[ACP] + ATP = 2,3-dihydroxybenzoyl-[ACP] + AMP + diphosphate. It catalyses the reaction 2,3-dihydroxybenzoyl-5'-AMP + holo-[ACP] = 2,3-dihydroxybenzoyl-[ACP] + AMP + H(+). Its pathway is siderophore biosynthesis; enterobactin biosynthesis. Its activity is regulated as follows. Inhibited by the adenylate analogs, 5'-O-[N-(salicyl)sulfamoyl]adenosine (Sal-AMS) and 5'-O-[N-(2,3-dihydroxybenzoyl)sulfamoyl]adenosine (DHB-AMS). Adenylation of 2,3-dihydroxybenzoate (DHB) is enhanced by a protein-protein interaction between the EntA and EntE. Involved in the biosynthesis of the siderophore enterobactin (enterochelin), which is a macrocyclic trimeric lactone of N-(2,3-dihydroxybenzoyl)-serine. The serine trilactone serves as a scaffolding for the three catechol functionalities that provide hexadentate coordination for the tightly ligated iron(2+) atoms. EntE processes via a two-step adenylation-ligation reaction (bi-uni-uni-bi ping-pong mechanism). First, it catalyzes the activation of the carboxylate group of 2,3-dihydroxy-benzoate (DHB), via a reversible ATP-dependent pyrophosphate exchange reactions to yield the acyladenylate intermediate 2,3-dihydroxybenzoyl-AMP. It can also transfer AMP to salicylate, 2,4-dihydroxybenzoate, gentisate and 2,3,4-trihydroxybenzoate. In the second step, DHB is transferred from 2,3-dihydroxybenzoyl-AMP onto the phosphopantetheinylated EntB (holo-EntB) to form DHB-holo-EntB. Then this product will serve in the formation of the amide bond between 2,3-dihydroxybenzoate (DHB) and L-serine. It can also transfer adenylated salicylate to holo-EntB. The sequence is that of Enterobactin synthase component E from Escherichia coli (strain K12).